Here is a 314-residue protein sequence, read N- to C-terminus: MSEELSFSAMVKAELALLTPELPCCRRMELAGLVRALGRLELSGRGRFALTLSTDSAPVSRKVIRLLKSVSPVRYEVMVMRRRKLRKNLVYRVHIPHQPGVAELLQLAGFIDEAGRPADWVEPPELANDHCRRAFLRGTFLGSGWVAGPEKQHHLEITTTATEAADALGQMLFRGGIAARMVARRESLVLYIKEADQIIRFLGLVGAHQALLRYEEVRVIKEMKNQVNRQVNAEVANMTKQADAAARQVEAIKRLEAAGALERVSPPLRELAGLRLAYPDASLKELGELCRPPVSKSGAAHRMRQLMALAESLE.

A DNA-binding region (H-T-H motif) is located at residues Ser-282 to Glu-314.

The protein belongs to the WhiA family.

Involved in cell division and chromosome segregation. The protein is Probable cell division protein WhiA of Symbiobacterium thermophilum (strain DSM 24528 / JCM 14929 / IAM 14863 / T).